The primary structure comprises 559 residues: Urocanate hydratase (559 aa).

Residues 54 to 55, Gln132, 178 to 180, Glu198, Arg203, 244 to 245, 265 to 269, 275 to 276, and Tyr324 contribute to the NAD(+) site; these read GG, GMG, NA, QTSAH, and YL. Cys412 is an active-site residue. Gly494 provides a ligand contact to NAD(+).

Belongs to the urocanase family. It depends on NAD(+) as a cofactor.

It localises to the cytoplasm. It catalyses the reaction 4-imidazolone-5-propanoate = trans-urocanate + H2O. Its pathway is amino-acid degradation; L-histidine degradation into L-glutamate; N-formimidoyl-L-glutamate from L-histidine: step 2/3. Functionally, catalyzes the conversion of urocanate to 4-imidazolone-5-propionate. In Azotobacter vinelandii (strain DJ / ATCC BAA-1303), this protein is Urocanate hydratase.